The sequence spans 641 residues: Phosphomethylpyrimidine synthase (641 aa).

Residues asparagine 221, methionine 250, tyrosine 279, histidine 315, 335–337, 376–379, and glutamate 415 contribute to the substrate site; these read SRG and DGLR. Residue histidine 419 participates in Zn(2+) binding. Tyrosine 442 serves as a coordination point for substrate. Histidine 483 serves as a coordination point for Zn(2+). Cysteine 563, cysteine 566, and cysteine 571 together coordinate [4Fe-4S] cluster.

The protein belongs to the ThiC family. Homodimer. [4Fe-4S] cluster is required as a cofactor.

The enzyme catalyses 5-amino-1-(5-phospho-beta-D-ribosyl)imidazole + S-adenosyl-L-methionine = 4-amino-2-methyl-5-(phosphooxymethyl)pyrimidine + CO + 5'-deoxyadenosine + formate + L-methionine + 3 H(+). Its pathway is cofactor biosynthesis; thiamine diphosphate biosynthesis. Functionally, catalyzes the synthesis of the hydroxymethylpyrimidine phosphate (HMP-P) moiety of thiamine from aminoimidazole ribotide (AIR) in a radical S-adenosyl-L-methionine (SAM)-dependent reaction. The protein is Phosphomethylpyrimidine synthase of Rhodopseudomonas palustris (strain TIE-1).